Reading from the N-terminus, the 202-residue chain is V-type ATP synthase subunit D (202 aa).

Belongs to the V-ATPase D subunit family.

Produces ATP from ADP in the presence of a proton gradient across the membrane. The polypeptide is V-type ATP synthase subunit D (atpD) (Borreliella burgdorferi (strain ATCC 35210 / DSM 4680 / CIP 102532 / B31) (Borrelia burgdorferi)).